A 423-amino-acid chain; its full sequence is F-box/LRR-repeat protein 2 (423 aa).

One can recognise an F-box domain in the interval 9 to 55; that stretch reads GLINKKLPKELLLRIFSFLDIVTLCRCAQISKAWNILALDGSNWQRI. LRR repeat units lie at residues 61–87, 88–113, 114–139, 140–165, 166–191, 192–217, 218–243, 244–269, 270–295, 296–321, 322–350, 351–375, and 376–401; these read QTDVEGRVVENISKRCGGFLRKLSLRG, CIGVGDSSLKTFAQNCRNIEHLNLNG, CTKITDSTCYSLSRFCSKLKHLDLTS, CVSITNSSLKGISEGCRHLEYLNLSW, CDQITKDGVEALVRGCRGLRALLLRG, CTQLEDEALKHIQNYCHELVSLNLQS, CSRVTDDGVVQLCRGCPRLQALCLSG, CGSLTDASLTALALNCPRLQILEAAR, CSHLTDAGFTLLARNCHDLEKMDLEE, CILITDRTLTQLSIHCPKLQALSLSH, CELITDDGILHLSNSPCGHERLRVLELDN, CLLITDVALEHLEHCRGLERLELYD, and CQQVTRAGIKRMRAQLPHVRVHAYFA. The interval 80 to 90 is interaction with Calmodulin; sequence LRKLSLRGCIG. K201 participates in a covalent cross-link: Glycyl lysine isopeptide (Lys-Gly) (interchain with G-Cter in ubiquitin). A Phosphothreonine modification is found at T404. C420 carries the S-geranylgeranyl cysteine lipid modification. Residues 420-423 carry the CAAX motif motif; that stretch reads CVIL.

As to quaternary structure, part of the SCF (SKP1-CUL1-F-box) E3 ubiquitin-protein ligase complex SCF(FBXL2) composed of CUL1, SKP1, RBX1 and FBXL2. Interacts with calmodulin; may antagonize substrate ubiquitination by SCF(FBXL2). May interact with PIK3R1. Interacts with PTPN13. Phosphorylated by GSK-beta (GSK3B), promoting recognition by FBXO3, leading to its ubiquitination by the SCF(FBXO3) complex. Post-translationally, ubiquitinated at Lys-201 by the SCF(FBXO3) complex in response to lipopolysaccharide (LPS), leading to its degradation by the proteasome.

It is found in the membrane. It participates in protein modification; protein ubiquitination. In terms of biological role, calcium-activated substrate recognition component of the SCF (SKP1-cullin-F-box protein) E3 ubiquitin-protein ligase complex, SCF(FBXL2), which mediates the ubiquitination and subsequent proteasomal degradation of target proteins. Unlike many F-box proteins, FBXL2 does not seem to target phosphodegron within its substrates but rather calmodulin-binding motifs and is thereby antagonized by calmodulin. This is the case for the cyclins CCND2 and CCND3 which polyubiquitination and subsequent degradation are inhibited by calmodulin. Through CCND2 and CCND3 degradation induces cell-cycle arrest in G(0). SCF(FBXL2) also mediates PIK3R2 ubiquitination and proteasomal degradation thereby regulating phosphatidylinositol 3-kinase signaling and autophagy. PCYT1A monoubiquitination by SCF(FBXL2) and subsequent degradation regulates synthesis of phosphatidylcholine, which is utilized for formation of membranes and of pulmonary surfactant. The SCF(FBXL2) complex acts as a regulator of inflammation by mediating ubiquitination and degradation of TRAF proteins (TRAF1, TRAF2, TRAF3, TRAF4, TRAF5 and TRAF6). The SCF(FBXL2) complex acts as a negative regulator of the NLRP3 inflammasome by mediating ubiquitination and degradation of NLRP3. This chain is F-box/LRR-repeat protein 2, found in Bos taurus (Bovine).